Here is a 508-residue protein sequence, read N- to C-terminus: CUGBP Elav-like family member 2 (508 aa).

2 necessary for RNA-binding, TNNT2 exon 5 and NMDA R1 exon 21 inclusion regions span residues 1–283 (MRCP…LQNL) and 357–508 (LAGM…SKPY). RRM domains follow at residues 40–123 (IKMF…PADS), 132–212 (RKLF…FADT), and 423–501 (ANLF…LKRS).

This sequence belongs to the CELF/BRUNOL family. As to quaternary structure, interacts with A1CF. As to expression, expressed in frontal cortex. Isoform 1 is expressed in brain and lung. Isoform 2 is expressed in heart, brain, placenta, lung, liver, kidney, skeletal muscle and pancreas. Isoform 4 is expressed in heart, lung, skeletal muscle, kidney and pancreas.

It is found in the nucleus. It localises to the cytoplasm. In terms of biological role, RNA-binding protein implicated in the regulation of several post-transcriptional events. Involved in pre-mRNA alternative splicing, mRNA translation and stability. Mediates exon inclusion and/or exclusion in pre-mRNA that are subject to tissue-specific and developmentally regulated alternative splicing. Specifically activates exon 5 inclusion of TNNT2 in embryonic, but not adult, skeletal muscle. Activates TNNT2 exon 5 inclusion by antagonizing the repressive effect of PTB. Acts both as an activator and as a repressor of a pair of coregulated exons: promotes inclusion of the smooth muscle (SM) exon but exclusion of the non-muscle (NM) exon in actinin pre-mRNAs. Promotes inclusion of exonS 21 and exclusion of exon 5 of the NMDA receptor R1 pre-mRNA. Involved in the apoB RNA editing activity. Increases COX2 mRNA stability and inhibits COX2 mRNA translation in epithelial cells after radiation injury. Modulates the cellular apoptosis program by regulating COX2-mediated prostaglandin E2 (PGE2) expression. Binds to (CUG)n triplet repeats in the 3'-UTR of transcripts such as DMPK. Binds to the muscle-specific splicing enhancer (MSE) intronic sites flanking the TNNT2 alternative exon 5. Binds preferentially to UG-rich sequences, in particular UG repeat and UGUU motifs. Binds to apoB mRNA, specifically to AU-rich sequences located immediately upstream of the edited cytidine. Binds AU-rich sequences in the 3'-UTR of COX2 mRNA. Binds to an intronic RNA element responsible for the silencing of exon 21 splicing. Binds to (CUG)n repeats. May be a specific regulator of miRNA biogenesis. Binds to primary microRNA pri-MIR140 and, with CELF1, negatively regulates the processing to mature miRNA. In Homo sapiens (Human), this protein is CUGBP Elav-like family member 2 (CELF2).